The following is a 344-amino-acid chain: Phenylalanine--tRNA ligase alpha subunit (344 aa).

Position 256 (Glu-256) interacts with Mg(2+).

Belongs to the class-II aminoacyl-tRNA synthetase family. Phe-tRNA synthetase alpha subunit type 1 subfamily. As to quaternary structure, tetramer of two alpha and two beta subunits. Mg(2+) serves as cofactor.

Its subcellular location is the cytoplasm. The catalysed reaction is tRNA(Phe) + L-phenylalanine + ATP = L-phenylalanyl-tRNA(Phe) + AMP + diphosphate + H(+). This is Phenylalanine--tRNA ligase alpha subunit from Bacillus licheniformis (strain ATCC 14580 / DSM 13 / JCM 2505 / CCUG 7422 / NBRC 12200 / NCIMB 9375 / NCTC 10341 / NRRL NRS-1264 / Gibson 46).